Consider the following 354-residue polypeptide: Probable butyrate kinase 2 (354 aa).

This sequence belongs to the acetokinase family.

Its subcellular location is the cytoplasm. The enzyme catalyses butanoate + ATP = butanoyl phosphate + ADP. The protein is Probable butyrate kinase 2 of Caldanaerobacter subterraneus subsp. tengcongensis (strain DSM 15242 / JCM 11007 / NBRC 100824 / MB4) (Thermoanaerobacter tengcongensis).